The primary structure comprises 28 residues: IPCGESCVWIPCISGMFGCSCKDKVCYS.

Disulfide bonds link C3-C19, C7-C21, and C12-C26. M16 bears the Methionine sulfoxide; in form chassatide chaC11A mark.

It belongs to the cyclotide family. Bracelet subfamily. As to expression, expressed in fruit, pedicel and stem but not in leaf and root (at protein level).

Chassatide C11: Probably participates in a plant defense mechanism. Active against E.coli ATCC 25922 (MIC=8.5 uM) but not against S.aureus ATCC 12600 or S.epidermidis ATCC 14990. Has cytotoxic and hemolytic activity. Its function is as follows. Chassatide C11A: Probably participates in a plant defense mechanism. Has no activity against bacteria up to a concentration of 80 uM. Has no cytotoxic and no hemolytic activity. The chain is Chassatide C11 from Chassalia chartacea (Chassalia curviflora).